A 278-amino-acid polypeptide reads, in one-letter code: 3-methyl-2-oxobutanoate hydroxymethyltransferase (278 aa).

Residues D43 and D82 each coordinate Mg(2+). Residues 43-44 (DS), D82, and K112 contribute to the 3-methyl-2-oxobutanoate site. E114 contacts Mg(2+). Residue E181 is the Proton acceptor of the active site.

It belongs to the PanB family. In terms of assembly, homodecamer; pentamer of dimers. The cofactor is Mg(2+).

The protein localises to the cytoplasm. It catalyses the reaction 3-methyl-2-oxobutanoate + (6R)-5,10-methylene-5,6,7,8-tetrahydrofolate + H2O = 2-dehydropantoate + (6S)-5,6,7,8-tetrahydrofolate. Its pathway is cofactor biosynthesis; (R)-pantothenate biosynthesis; (R)-pantoate from 3-methyl-2-oxobutanoate: step 1/2. Catalyzes the reversible reaction in which hydroxymethyl group from 5,10-methylenetetrahydrofolate is transferred onto alpha-ketoisovalerate to form ketopantoate. This is 3-methyl-2-oxobutanoate hydroxymethyltransferase from Desulfitobacterium hafniense (strain Y51).